A 285-amino-acid chain; its full sequence is Probable endonuclease 4 (285 aa).

The Zn(2+) site is built by histidine 69, histidine 109, glutamate 145, aspartate 179, histidine 182, histidine 216, aspartate 229, histidine 231, and glutamate 261.

Belongs to the AP endonuclease 2 family. It depends on Zn(2+) as a cofactor.

It carries out the reaction Endonucleolytic cleavage to 5'-phosphooligonucleotide end-products.. Endonuclease IV plays a role in DNA repair. It cleaves phosphodiester bonds at apurinic or apyrimidinic (AP) sites, generating a 3'-hydroxyl group and a 5'-terminal sugar phosphate. This chain is Probable endonuclease 4, found in Yersinia pestis bv. Antiqua (strain Antiqua).